The chain runs to 693 residues: Sodium-dependent phosphate transport protein 2B (693 aa).

A disordered region spans residues 1–46 (MAPWPELENSQPTSEKYTVKADGEQSAKPEKAKETEKDDTGTPITK). Residues 1-89 (MAPWPELENS…KWSERDTKGK (89 aa)) lie on the Cytoplasmic side of the membrane. A compositionally biased stretch (basic and acidic residues) spans 17-40 (YTVKADGEQSAKPEKAKETEKDDT). The helical transmembrane segment at 90–110 (ILCVFQGIGKFILLLVFLYFF) threads the bilayer. Over 111–135 (VCSLDVLSSAFQLVGGKVAGKFFNN) the chain is Extracellular. A helical membrane pass occupies residues 136–156 (NSIMSNPLAGMVIGVLVTVLV). Over 157 to 212 (QSSSTSTSIVVSMVASSLLPVHAAIPIIMGANIGTSITNTIVALMQAGDRKEFRRA) the chain is Cytoplasmic. Residues 213–233 (FAGATVHDFFNWLSVLVLLPL) form a helical membrane-spanning segment. Residues 234–361 (EAATGYLERL…IFVNFNLSDA (128 aa)) lie on the Extracellular side of the membrane. The cysteines at positions 302 and 349 are disulfide-linked. 2 N-linked (GlcNAc...) asparagine glycosylation sites follow: N307 and N320. Residues 362–382 (IVGTILLITSLLILCTCLILI) form a helical membrane-spanning segment. The Cytoplasmic portion of the chain corresponds to 383-408 (VKLLGSVLRGQVAAVIKKTINTDFPY). A helical transmembrane segment spans residues 409-429 (PFSWVTGYLAILVGAGMTFIV). Topologically, residues 430-485 (QSSSVFTSAMTPLIGIGVISIQRAYPLTLGANIGTTTTAILAALASPGSTLKSSLQ) are extracellular. A helical transmembrane segment spans residues 486 to 506 (IALCHFFFNISGIILWYPIPF). The Cytoplasmic portion of the chain corresponds to 507–525 (TRLPIRLAKGLGNISSKYR). The helical transmembrane segment at 526-546 (WFAIVYLIVFFLLIPLAVFGL) threads the bilayer. At 547–550 (SLIG) the chain is on the extracellular side. The chain crosses the membrane as a helical span at residues 551–571 (WPVLVGVASPIVLVILLVVVL). Over 572 to 693 (KILQSFCPGS…TKIVSSVTAL (122 aa)) the chain is Cytoplasmic.

It belongs to the SLC34A transporter family. Post-translationally, glycosylated.

It is found in the apical cell membrane. It carries out the reaction 3 Na(+)(out) + phosphate(out) = 3 Na(+)(in) + phosphate(in). In terms of biological role, involved in actively transporting phosphate into cells via Na(+) cotransport. The chain is Sodium-dependent phosphate transport protein 2B (SLC34A2) from Bos taurus (Bovine).